The following is a 239-amino-acid chain: Ribonuclease 3 (239 aa).

The region spanning 18 to 141 (YLTLEKALGY…LMAGVYLEAG (124 aa)) is the RNase III domain. Glu-54 contacts Mg(2+). The active site involves Asp-58. The Mg(2+) site is built by Ser-127 and Glu-130. Residue Glu-130 is part of the active site. In terms of domain architecture, DRBM spans 168-237 (DYKTALQELT…AYQALQKLKE (70 aa)).

The protein belongs to the ribonuclease III family. In terms of assembly, homodimer. Requires Mg(2+) as cofactor.

The protein resides in the cytoplasm. The enzyme catalyses Endonucleolytic cleavage to 5'-phosphomonoester.. In terms of biological role, digests double-stranded RNA. Involved in the processing of primary rRNA transcript to yield the immediate precursors to the large and small rRNAs (23S and 16S). Processes some mRNAs, and tRNAs when they are encoded in the rRNA operon. Processes pre-crRNA and tracrRNA of type II CRISPR loci if present in the organism. This Helicobacter pylori (strain J99 / ATCC 700824) (Campylobacter pylori J99) protein is Ribonuclease 3.